The chain runs to 145 residues: D-aminoacyl-tRNA deacylase (145 aa).

Positions 137–138 (GP) match the Gly-cisPro motif, important for rejection of L-amino acids motif.

The protein belongs to the DTD family. In terms of assembly, homodimer.

The protein localises to the cytoplasm. The catalysed reaction is glycyl-tRNA(Ala) + H2O = tRNA(Ala) + glycine + H(+). It carries out the reaction a D-aminoacyl-tRNA + H2O = a tRNA + a D-alpha-amino acid + H(+). Functionally, an aminoacyl-tRNA editing enzyme that deacylates mischarged D-aminoacyl-tRNAs. Also deacylates mischarged glycyl-tRNA(Ala), protecting cells against glycine mischarging by AlaRS. Acts via tRNA-based rather than protein-based catalysis; rejects L-amino acids rather than detecting D-amino acids in the active site. By recycling D-aminoacyl-tRNA to D-amino acids and free tRNA molecules, this enzyme counteracts the toxicity associated with the formation of D-aminoacyl-tRNA entities in vivo and helps enforce protein L-homochirality. The sequence is that of D-aminoacyl-tRNA deacylase from Legionella pneumophila (strain Paris).